Reading from the N-terminus, the 249-residue chain is Aspartate/glutamate leucyltransferase (249 aa).

The protein belongs to the R-transferase family. Bpt subfamily.

It localises to the cytoplasm. The enzyme catalyses N-terminal L-glutamyl-[protein] + L-leucyl-tRNA(Leu) = N-terminal L-leucyl-L-glutamyl-[protein] + tRNA(Leu) + H(+). The catalysed reaction is N-terminal L-aspartyl-[protein] + L-leucyl-tRNA(Leu) = N-terminal L-leucyl-L-aspartyl-[protein] + tRNA(Leu) + H(+). In terms of biological role, functions in the N-end rule pathway of protein degradation where it conjugates Leu from its aminoacyl-tRNA to the N-termini of proteins containing an N-terminal aspartate or glutamate. This Brucella abortus (strain 2308) protein is Aspartate/glutamate leucyltransferase.